Here is a 297-residue protein sequence, read N- to C-terminus: Proline iminopeptidase (297 aa).

The AB hydrolase-1 domain maps to 26-131; sequence VLLLHGGPAM…GLLVSNMMAS (106 aa). S103 serves as the catalytic Nucleophile. Residue D243 is part of the active site. H270 (proton donor) is an active-site residue.

Belongs to the peptidase S33 family. Monomer.

The enzyme catalyses Release of N-terminal proline from a peptide.. In terms of biological role, releases the N-terminal proline from various substrates. This Flavobacterium johnsoniae (strain ATCC 17061 / DSM 2064 / JCM 8514 / BCRC 14874 / CCUG 350202 / NBRC 14942 / NCIMB 11054 / UW101) (Cytophaga johnsonae) protein is Proline iminopeptidase (fpaP).